Here is a 428-residue protein sequence, read N- to C-terminus: tRNA(Ile)-lysidine synthase (428 aa).

28–33 serves as a coordination point for ATP; it reads SGGVDS.

It belongs to the tRNA(Ile)-lysidine synthase family.

It is found in the cytoplasm. The catalysed reaction is cytidine(34) in tRNA(Ile2) + L-lysine + ATP = lysidine(34) in tRNA(Ile2) + AMP + diphosphate + H(+). Functionally, ligates lysine onto the cytidine present at position 34 of the AUA codon-specific tRNA(Ile) that contains the anticodon CAU, in an ATP-dependent manner. Cytidine is converted to lysidine, thus changing the amino acid specificity of the tRNA from methionine to isoleucine. The polypeptide is tRNA(Ile)-lysidine synthase (Streptococcus pyogenes serotype M6 (strain ATCC BAA-946 / MGAS10394)).